The following is a 455-amino-acid chain: MASFSILSIFKIGVGPSSSHTIGPMEAGARFCESLKGILEQVVRVQITLHGSLALTGKGHLSDEAVLIGLHGIYANELEVTTKKALLHEALENKVLKLANQHHIPFDYAKDLIFDNKPLTRHQNALILKAFNSKNEVLKEETYYSVGGGFVYTEKELDNLSEEDGNESIAYDFSSAKELLELCQKHQKSIAEIVRLRENALKNHPDATMVKIYHAMLECYDNGANSKERYLPGSLKVTRLAPSIKTRLEKHPTSGKDPLALIDYISLYARAIAEENASGGKVVTAPTNGACAVVPSVLLYAKNHLFENLSQKAINDFLLTSAAIGYLYKKNASLSGAEAGCQAEIGVASSMAAGGLAHLCQATTQQVLIASEIAMEHHLGLTCDPVGGLVQIPCIERNVLGAIKAISASKLALEDEYKPKVSLDEVIATMYATGKDMNEKYKETSLGGLAKTLKC.

Belongs to the iron-sulfur dependent L-serine dehydratase family. Requires [4Fe-4S] cluster as cofactor.

The enzyme catalyses L-serine = pyruvate + NH4(+). The protein operates within carbohydrate biosynthesis; gluconeogenesis. This chain is L-serine dehydratase (sdaA), found in Helicobacter pylori (strain ATCC 700392 / 26695) (Campylobacter pylori).